The sequence spans 439 residues: Proline--tRNA ligase (439 aa).

Belongs to the class-II aminoacyl-tRNA synthetase family. ProS type 2 subfamily. Homodimer.

The protein resides in the cytoplasm. It carries out the reaction tRNA(Pro) + L-proline + ATP = L-prolyl-tRNA(Pro) + AMP + diphosphate. Functionally, catalyzes the attachment of proline to tRNA(Pro) in a two-step reaction: proline is first activated by ATP to form Pro-AMP and then transferred to the acceptor end of tRNA(Pro). In Parvibaculum lavamentivorans (strain DS-1 / DSM 13023 / NCIMB 13966), this protein is Proline--tRNA ligase.